Consider the following 1503-residue polypeptide: MMNTNELFDQTAVNSSQDKPLNPPFAVAQPANIARGKFRSLTLINWNGFFARTFDFDELVTTLSGGNGAGKSTTMAGFVTALIPDLTLLNFRNTTEAGSTSSSRDKGLYGKLKAGVCYAVLETVNSRAQRIITGVRLQQIAGRDKKVDIRPFSLQNVPMADSVISLFTEQVANKARVLSLNDLKEKFEETAVTFKPYHSITDYHSFMFDLGILPKRLRSSSDRNKFYKLIEASLYGGISSVITKSLRDYLLPENSGVRQAFQDMEAALRENRMTLEAIKVTQSDRDMFKHLITEATQYVSADYMRNANERRGNVVSALAQRRTWYDTKAKLLVEEQRLIEFSREVADINLTEQSLESEYNVANDHLNLVMNALRHQEKIIRYQDEVDALNEKLEQQQIALEEVSEQVEDAQAHTDEIDDRVDGLRSQIADYQQALDAQQTRALQYQQAITALQKAQQLCALPHLDLDNLKDYQTEFEAQAQDITDHVFELEQRLSISDMTKTQFEKAYQLVCKVSGEIDRSQAWSEATQLLATFPDQKMQAAQAVALRQKLADLEQRLHQQQKVQRLIAEFNQQAAKKLTDFTALENHFEQQQIKLEDLEAELANVIELRSVHRQQQEQLTQQYNQLAKTAPAWHTARSVLTRLEEQCAEQFENSQAIMHCMQEMLRKEREATLERDELARTEAALASQISQLSQADGAEDIRLNQLAERLGGVLLSELYDDVSLQDAPYFSALYGEARHAIVVRDLTSVKAQLEKLTDCPNDLYLIEGDPTAFDDTVFSAEELYDSVIVKVSNRQWRYSKFPEVPLFGRAAREKHLITLKTERDDIAEQHAESAFNVQKYQRLHQHLSQFVGTHLNIAFQPDPEMLMQEIALERQEIEGQLNQAVENEHYLRQQADHLKAELQMLNKILPLANTLADETVMERFEECREQLQSAEENELFVRQFGQYLTQLAPIATSLQTDPSKFEQLEHDYQQAKSTQRILQQKVFALSDVMQRRLHFNYSEENQCEGSALTEQLRTDLALAQQEREQARQRLRQAQAQFTQYNQVLISLRSAYDAKYQMLQELMQEIDDLGVRGDSAAEECARLRRDELQQQLSQQRARKGYLDKQLGIIEAEIDNLNRLLRKTERDYQTQRELVVQAKASWCLVQKLSRNSDVEKRLNRRELAYQSAEELRSISDKALGALRTAVADNEYLRDSLRASEDSRKPENKVAFFIAVYQHLRERIRQDIIRTDDPIDAIEQMEIELSRLINELTSREKKLAISAESVANILRKTIQREQNRILQLNQGLQNIAFGQVKGVRLVVNIRDTHSILLNALSDQHEQHKDLFESQKLSFSEALAMLYKRVNPHIELGQRMPQTIGEELLDYRNYLDLEVETLRGADGWMRAESSALSTGEAIGTGMSILLMVVQSWEEESRRMRAKDILPCRLLFLDEAARLDAMSINTLFELCERLDMQLLIAAPENISPEHGTTYKLVRKILANQEYVHVVGLKGFGQQMNKST.

Residues 1–19 (MMNTNELFDQTAVNSSQDK) show a composition bias toward polar residues. A disordered region spans residues 1-21 (MMNTNELFDQTAVNSSQDKPL). Residue 65-72 (GGNGAGKS) participates in ATP binding. 5 coiled-coil regions span residues 370–495 (MNAL…QRLS), 536–616 (DQKM…HRQQ), 662–697 (MQEMLRKEREATLERDELARTEAALASQISQLSQAD), 865–1173 (EMLM…SAEE), and 1238–1293 (DAIE…LQNI). A flexible hinge region spans residues 696–813 (ADGAEDIRLN…EVPLFGRAAR (118 aa)).

The protein belongs to the SMC family. MukB subfamily. Homodimerization via its hinge domain. Binds to DNA via its C-terminal region. Interacts, and probably forms a ternary complex, with MukE and MukF via its C-terminal region. The complex formation is stimulated by calcium or magnesium. Interacts with tubulin-related protein FtsZ.

It is found in the cytoplasm. It localises to the nucleoid. Plays a central role in chromosome condensation, segregation and cell cycle progression. Functions as a homodimer, which is essential for chromosome partition. Involved in negative DNA supercoiling in vivo, and by this means organize and compact chromosomes. May achieve or facilitate chromosome segregation by condensation DNA from both sides of a centrally located replisome during cell division. The protein is Chromosome partition protein MukB of Haemophilus ducreyi (strain 35000HP / ATCC 700724).